Reading from the N-terminus, the 198-residue chain is Guanylate kinase (198 aa).

The region spanning 6-192 is the Guanylate kinase-like domain; it reads KSIVIFTGPS…AAQEIREILH (187 aa). 13–20 is a binding site for ATP; it reads GPSGVGKG.

This sequence belongs to the guanylate kinase family.

It is found in the cytoplasm. The enzyme catalyses GMP + ATP = GDP + ADP. In terms of biological role, essential for recycling GMP and indirectly, cGMP. The protein is Guanylate kinase of Mycoplasmopsis synoviae (strain 53) (Mycoplasma synoviae).